Reading from the N-terminus, the 67-residue chain is DNA-directed RNA polymerase subunit omega (67 aa).

Belongs to the RNA polymerase subunit omega family. The RNAP catalytic core consists of 2 alpha, 1 beta, 1 beta' and 1 omega subunit. When a sigma factor is associated with the core the holoenzyme is formed, which can initiate transcription.

The enzyme catalyses RNA(n) + a ribonucleoside 5'-triphosphate = RNA(n+1) + diphosphate. Its function is as follows. Promotes RNA polymerase assembly. Latches the N- and C-terminal regions of the beta' subunit thereby facilitating its interaction with the beta and alpha subunits. This chain is DNA-directed RNA polymerase subunit omega, found in Bordetella pertussis (strain Tohama I / ATCC BAA-589 / NCTC 13251).